The chain runs to 1412 residues: DNA-directed RNA polymerase subunit beta'' (1412 aa).

The Zn(2+) site is built by Cys220, Cys294, Cys301, and Cys304.

This sequence belongs to the RNA polymerase beta' chain family. RpoC2 subfamily. In plastids the minimal PEP RNA polymerase catalytic core is composed of four subunits: alpha, beta, beta', and beta''. When a (nuclear-encoded) sigma factor is associated with the core the holoenzyme is formed, which can initiate transcription. Zn(2+) serves as cofactor.

Its subcellular location is the plastid. It is found in the chloroplast. It catalyses the reaction RNA(n) + a ribonucleoside 5'-triphosphate = RNA(n+1) + diphosphate. Functionally, DNA-dependent RNA polymerase catalyzes the transcription of DNA into RNA using the four ribonucleoside triphosphates as substrates. The polypeptide is DNA-directed RNA polymerase subunit beta'' (Chara vulgaris (Common stonewort)).